We begin with the raw amino-acid sequence, 823 residues long: Aminopeptidase O (823 aa).

Residue His481 coordinates Zn(2+). The Proton acceptor role is filled by Glu482. Residues His485 and Glu504 each coordinate Zn(2+). The Nucleolar localization signal motif lies at 693–703 (RRPRKRKRGKR).

It belongs to the peptidase M1 family. It depends on Zn(2+) as a cofactor. Expressed in testis, heart, brain, lung, liver, skeletal muscle, kidney and ovary. Expressed in vascular tissues.

The protein localises to the nucleus. It localises to the nucleolus. The protein resides in the cytoplasm. Functionally, aminopeptidase which catalyzes the hydrolysis of amino acid residues from the N-terminus of peptide or protein substrates. The chain is Aminopeptidase O (Aopep) from Mus musculus (Mouse).